A 265-amino-acid polypeptide reads, in one-letter code: Translation initiation factor 2 subunit alpha (265 aa).

The S1 motif domain maps to 12–83 (GELIIGTVYK…KKGHVDASLK (72 aa)).

The protein belongs to the eIF-2-alpha family. In terms of assembly, heterotrimer composed of an alpha, a beta and a gamma chain.

Its function is as follows. eIF-2 functions in the early steps of protein synthesis by forming a ternary complex with GTP and initiator tRNA. In Methanobrevibacter smithii (strain ATCC 35061 / DSM 861 / OCM 144 / PS), this protein is Translation initiation factor 2 subunit alpha.